We begin with the raw amino-acid sequence, 115 residues long: Large ribosomal subunit protein bL20 (115 aa).

Belongs to the bacterial ribosomal protein bL20 family.

Its function is as follows. Binds directly to 23S ribosomal RNA and is necessary for the in vitro assembly process of the 50S ribosomal subunit. It is not involved in the protein synthesizing functions of that subunit. The sequence is that of Large ribosomal subunit protein bL20 from Prochlorococcus marinus (strain MIT 9312).